A 444-amino-acid chain; its full sequence is UDP-N-acetylmuramoylalanine--D-glutamate ligase (444 aa).

Residue 118 to 124 (GTNGKTT) participates in ATP binding.

This sequence belongs to the MurCDEF family.

The protein localises to the cytoplasm. The enzyme catalyses UDP-N-acetyl-alpha-D-muramoyl-L-alanine + D-glutamate + ATP = UDP-N-acetyl-alpha-D-muramoyl-L-alanyl-D-glutamate + ADP + phosphate + H(+). It participates in cell wall biogenesis; peptidoglycan biosynthesis. In terms of biological role, cell wall formation. Catalyzes the addition of glutamate to the nucleotide precursor UDP-N-acetylmuramoyl-L-alanine (UMA). This chain is UDP-N-acetylmuramoylalanine--D-glutamate ligase, found in Protochlamydia amoebophila (strain UWE25).